Consider the following 509-residue polypeptide: Protein OS-9 homolog (509 aa).

A signal peptide spans 1-23; it reads MRRQSRIVASLLVLACASSGAFA. Residues 64–74 are compositionally biased toward polar residues; that stretch reads SPDLNDISEQT. The disordered stretch occupies residues 64–91; the sequence is SPDLNDISEQTPLKDESEESIRDGSSGE. The segment covering 75 to 91 has biased composition (basic and acidic residues); the sequence is PLKDESEESIRDGSSGE. Residue Asn-120 is glycosylated (N-linked (GlcNAc...) asparagine). Residues 151-291 form the MRH domain; the sequence is GKCLYYISGW…LIYTPRLCND (141 aa). The cysteines at positions 153 and 166 are disulfide-linked. Positions 160, 161, 173, 246, 252, 273, and 279 each coordinate a mannooligosaccharide derivative. Intrachain disulfides connect Cys-245-Cys-277 and Cys-260-Cys-289. Residues 433–509 form a disordered region; it reads GVVDTDEDEE…GSEEIFKDEL (77 aa). Residues 436–451 are compositionally biased toward acidic residues; that stretch reads DTDEDEEDGYENEEGE. The segment covering 452–461 has biased composition (basic and acidic residues); the sequence is TDKREQRENT. The segment covering 489–502 has biased composition (acidic residues); it reads RSEDGEDPDVDGSE. The Prevents secretion from ER motif lies at 506-509; sequence KDEL.

It belongs to the OS-9 family. In terms of assembly, interacts with missfolded ER lumenal proteins.

It localises to the endoplasmic reticulum membrane. In terms of biological role, lectin involved in the quality control of the secretory pathway. As a member of the endoplasmic reticulum-associated degradation lumenal (ERAD-L) surveillance system, targets misfolded endoplasmic reticulum lumenal glycoproteins for degradation. The protein is Protein OS-9 homolog (yos9) of Emericella nidulans (strain FGSC A4 / ATCC 38163 / CBS 112.46 / NRRL 194 / M139) (Aspergillus nidulans).